Consider the following 137-residue polypeptide: Large ribosomal subunit protein uL13 (137 aa).

The residue at position 55 (Arg55) is a Citrulline. At Ser73 the chain carries Phosphoserine. The residue at position 136 (Arg136) is a Citrulline.

It belongs to the universal ribosomal protein uL13 family. Component of the 60S ribosome. Component of the GAIT complex. Interacts with EIF4G1. Post-translationally, phosphorylation at Ser-73 upon interferon-gamma treatment in macrophages involves a DAPK1-DAPK3 kinase cascade and is causing release from the ribosome, association with the GAIT complex and subsequent involvement in transcript-selective translation inhibition. Citrullinated by PADI4.

The protein resides in the cytoplasm. In terms of biological role, associated with ribosomes but is not required for canonical ribosome function and has extra-ribosomal functions. Component of the GAIT (gamma interferon-activated inhibitor of translation) complex which mediates interferon-gamma-induced transcript-selective translation inhibition in inflammation processes. Upon interferon-gamma activation and subsequent phosphorylation dissociates from the ribosome and assembles into the GAIT complex which binds to stem loop-containing GAIT elements in the 3'-UTR of diverse inflammatory mRNAs (such as ceruplasmin) and suppresses their translation. In the GAIT complex interacts with m7G cap-bound eIF4G at or near the eIF3-binding site and blocks the recruitment of the 43S ribosomal complex. Involved in methylation of rRNA. This chain is Large ribosomal subunit protein uL13 (RPL13A), found in Sus scrofa (Pig).